The sequence spans 37 residues: Large ribosomal subunit protein bL36c (37 aa).

It belongs to the bacterial ribosomal protein bL36 family.

The protein resides in the plastid. It is found in the chloroplast. The chain is Large ribosomal subunit protein bL36c from Huperzia lucidula (Shining clubmoss).